The chain runs to 175 residues: Large ribosomal subunit protein uL10 (175 aa).

The protein belongs to the universal ribosomal protein uL10 family. In terms of assembly, part of the ribosomal stalk of the 50S ribosomal subunit. The N-terminus interacts with L11 and the large rRNA to form the base of the stalk. The C-terminus forms an elongated spine to which L12 dimers bind in a sequential fashion forming a multimeric L10(L12)X complex.

Its function is as follows. Forms part of the ribosomal stalk, playing a central role in the interaction of the ribosome with GTP-bound translation factors. This chain is Large ribosomal subunit protein uL10 (rplJ), found in Xylella fastidiosa (strain 9a5c).